Reading from the N-terminus, the 291-residue chain is Peptide methionine sulfoxide reductase MsrB/MsrA (291 aa).

Residues 1–124 (MLANLQHLSD…NSAALRFVAR (124 aa)) form the MsrB domain. The active-site Nucleophile is Cys113. Positions 127-284 (GTALFAAGCF…PGGYCHVSLH (158 aa)) are peptide methionine sulfoxide reductase A. Cys135 is an active-site residue.

In the N-terminal section; belongs to the MsrB Met sulfoxide reductase family. This sequence in the C-terminal section; belongs to the MsrA Met sulfoxide reductase family.

The enzyme catalyses L-methionyl-[protein] + [thioredoxin]-disulfide + H2O = L-methionyl-(R)-S-oxide-[protein] + [thioredoxin]-dithiol. The catalysed reaction is L-methionyl-[protein] + [thioredoxin]-disulfide + H2O = L-methionyl-(S)-S-oxide-[protein] + [thioredoxin]-dithiol. It catalyses the reaction [thioredoxin]-disulfide + L-methionine + H2O = L-methionine (S)-S-oxide + [thioredoxin]-dithiol. Its function is as follows. Has an important function as a repair enzyme for proteins that have been inactivated by oxidation. Catalyzes the reversible oxidation-reduction of methionine sulfoxide in proteins to methionine. In Treponema pallidum (strain Nichols), this protein is Peptide methionine sulfoxide reductase MsrB/MsrA (msrAB).